The primary structure comprises 419 residues: DNA polymerase IV (419 aa).

A UmuC domain is found at 12–193 (IFHIDMNCFY…MSVEEMYGIG (182 aa)). Positions 16 and 112 each coordinate Mg(2+). Glutamate 113 is a catalytic residue. The tract at residues 388-419 (IITSQKNKNESQENQQPRTSFQKDFLDDYKKP) is disordered.

Belongs to the DNA polymerase type-Y family. Monomer. It depends on Mg(2+) as a cofactor.

The protein localises to the cytoplasm. It carries out the reaction DNA(n) + a 2'-deoxyribonucleoside 5'-triphosphate = DNA(n+1) + diphosphate. In terms of biological role, poorly processive, error-prone DNA polymerase involved in untargeted mutagenesis. Copies undamaged DNA at stalled replication forks, which arise in vivo from mismatched or misaligned primer ends. These misaligned primers can be extended by PolIV. Exhibits no 3'-5' exonuclease (proofreading) activity. May be involved in translesional synthesis, in conjunction with the beta clamp from PolIII. The sequence is that of DNA polymerase IV from Oceanobacillus iheyensis (strain DSM 14371 / CIP 107618 / JCM 11309 / KCTC 3954 / HTE831).